We begin with the raw amino-acid sequence, 582 residues long: Multicopper oxidase LPR1 homolog 1 (582 aa).

A signal peptide spans 1-20 (MRAKVELAVLLLVLVGVAAG). Residues His150, His152, His198, and His200 each contribute to the Cu cation site. Asn256, Asn300, and Asn308 each carry an N-linked (GlcNAc...) asparagine glycan. Residues 285-354 (PFLAVARRRY…DVVVDFSQST (70 aa)) enclose the Plastocyanin-like domain. Residues His467, His470, and His472 each contribute to the Cu cation site. N-linked (GlcNAc...) asparagine glycosylation is present at Asn504. Cu cation-binding residues include His563, Cys564, His565, His569, and Met574.

The protein belongs to the multicopper oxidase family. Requires Cu cation as cofactor. Highly expressed in roots, and at lower levels in basal stems and leaf blades.

The protein localises to the endoplasmic reticulum membrane. Multicopper oxidase that may play a role in the maintenance of inorganic phosphate homeostasis. The polypeptide is Multicopper oxidase LPR1 homolog 1 (Oryza sativa subsp. japonica (Rice)).